Reading from the N-terminus, the 214-residue chain is tRNA (guanine-N(7)-)-methyltransferase (214 aa).

Glu44, Glu69, Asp96, and Asp118 together coordinate S-adenosyl-L-methionine. Asp118 is a catalytic residue. Substrate contacts are provided by residues Lys122, Asp154, and 191 to 194 (TEYE).

It belongs to the class I-like SAM-binding methyltransferase superfamily. TrmB family.

It carries out the reaction guanosine(46) in tRNA + S-adenosyl-L-methionine = N(7)-methylguanosine(46) in tRNA + S-adenosyl-L-homocysteine. Its pathway is tRNA modification; N(7)-methylguanine-tRNA biosynthesis. Its function is as follows. Catalyzes the formation of N(7)-methylguanine at position 46 (m7G46) in tRNA. The polypeptide is tRNA (guanine-N(7)-)-methyltransferase (Listeria innocua serovar 6a (strain ATCC BAA-680 / CLIP 11262)).